The following is a 352-amino-acid chain: Uroporphyrinogen decarboxylase (352 aa).

Substrate is bound by residues 26-30 (RQAGR), aspartate 76, tyrosine 153, serine 208, and histidine 323.

The protein belongs to the uroporphyrinogen decarboxylase family. As to quaternary structure, homodimer.

It localises to the cytoplasm. The enzyme catalyses uroporphyrinogen III + 4 H(+) = coproporphyrinogen III + 4 CO2. It functions in the pathway porphyrin-containing compound metabolism; protoporphyrin-IX biosynthesis; coproporphyrinogen-III from 5-aminolevulinate: step 4/4. Functionally, catalyzes the decarboxylation of four acetate groups of uroporphyrinogen-III to yield coproporphyrinogen-III. The polypeptide is Uroporphyrinogen decarboxylase (Synechococcus sp. (strain CC9902)).